The following is a 325-amino-acid chain: Polyprenyl transferase mpaA (325 aa).

The next 3 helical transmembrane spans lie at 27-47 (MPYY…ALKL), 56-76 (VEYI…LCGA), and 108-128 (VEAL…LDLI). Asn-131 carries an N-linked (GlcNAc...) asparagine glycan. Helical transmembrane passes span 134–151 (IWGL…YPYL), 159–179 (VFIY…ITGW), 192–212 (IFTH…YFNT), 240–260 (LFLA…VLKI), 262–282 (SPWL…MQIV), and 295–315 (IHWD…VEVG).

It belongs to the UbiA prenyltransferase family. It depends on Mg(2+) as a cofactor.

It localises to the golgi apparatus membrane. The enzyme catalyses 5,7-dihydroxy-4-methylphthalide + (2E,6E)-farnesyl diphosphate = 4-farnesyl-3,5-dihydroxy-6-methylphthalide + diphosphate. Its pathway is secondary metabolite biosynthesis; terpenoid biosynthesis. Its function is as follows. Polyprenyl transferase; part of the gene cluster that mediates the biosynthesis of mycophenolic acid (MPA), the first isolated antibiotic natural product in the world obtained from a culture of Penicillium brevicompactum in 1893. MpaA is a Golgi apparatus-associated enzyme that catalyzes the prenylation of 5,7-dihydroxy-4,6-dimethylphthalide (DHMP) to yield farnesyl-DHMP (FDHMP). The first step of the pathway is the synthesis of 5-methylorsellinic acid (5MOA) by the cytosolic polyketide synthase mpaC. 5MOA is then converted to the phthalide compound 5,7-dihydroxy-4,6-dimethylphthalide (DHMP) by the endoplasmic reticulum-bound cytochrome P450 monooxygenase mpaDE. MpaDE first catalyzes hydroxylation of 5-MOA to 4,6-dihydroxy-2-(hydroxymethyl)-3-methylbenzoic acid (DHMB). MpaDE then acts as a lactone synthase that catalyzes the ring closure to convert DHMB into DHMP. The next step is the prenylation of DHMP by the Golgi apparatus-associated prenyltransferase mpaA to yield farnesyl-DHMP (FDHMP). The ER-bound oxygenase mpaB then mediates the oxidative cleavage the C19-C20 double bond in FDHMP to yield FDHMP-3C via a mycophenolic aldehyde intermediate. The O-methyltransferase mpaG catalyzes the methylation of FDHMP-3C to yield MFDHMP-3C. After the cytosolic methylation of FDHMP-3C, MFDHMP-3C enters into peroxisomes probably via free diffusion due to its low molecular weight. Upon a peroxisomal CoA ligation reaction, catalyzed by a beta-oxidation component enzyme acyl-CoA ligase ACL891, MFDHMP-3C-CoA would then be restricted to peroxisomes for the following beta-oxidation pathway steps. The peroxisomal beta-oxidation machinery than converts MFDHMP-3C-CoA into MPA_CoA, via a beta-oxidation chain-shortening process. Finally mpaH acts as a peroxisomal acyl-CoA hydrolase with high substrate specificity toward MPA-CoA to release the final product MPA. In Penicillium roqueforti (strain FM164), this protein is Polyprenyl transferase mpaA.